The chain runs to 180 residues: GTP cyclohydrolase 1 (180 aa).

Positions 71, 74, and 142 each coordinate Zn(2+).

The protein belongs to the GTP cyclohydrolase I family. Toroid-shaped homodecamer, composed of two pentamers of five dimers.

It catalyses the reaction GTP + H2O = 7,8-dihydroneopterin 3'-triphosphate + formate + H(+). It functions in the pathway cofactor biosynthesis; 7,8-dihydroneopterin triphosphate biosynthesis; 7,8-dihydroneopterin triphosphate from GTP: step 1/1. This chain is GTP cyclohydrolase 1, found in Helicobacter acinonychis (strain Sheeba).